A 530-amino-acid chain; its full sequence is MSVDTYGETPKIKKLLEKESSLFQLSTTQLYYKIMDNNEGELTELGAINASTGKYTGRSPKDKFIVTEPSYKDNIHWGDINQPIDEETFLNLYSKVLDYLDKKDELYVFNGYAGSDKDTQLKLTVINELAWHNLFAQNMFIRPDSKEEASNIKPNFTIVSAPHFKADPEVDGTKSETFVIISFKHKTILIGGTEYAGEMKKGIFSVMNYLLPMQDIMSMHCSANVGDKGDVALFFGLSGTGKTTLSAAPDRKLIGDDEHGWNKNGIFNIEGGCYAKAINLSKEKEPQIYNAIQYGTILENTVVNERGVVDFDDNSYTENTRAAYPIHHIDNIVLPSKAAHPNTIIFLTADAFGVLPPIAKLTKSQAMYHFLSGFTSKLAGTERGVTEPEPSFSTCFGAPFLPLNPNKYADLLGELIDKHDVDVYLVNTGWTGGKYGVGRRISLHYTRYMVDQAIKGKLKNAEFTKDEKFGLSIPTEMEDVPKTILNPINAWSDSDKYRAQADDLIQRFEENFKKFGPEVEEIANTGGFNK.

The substrate site is built by Arg58, Tyr195, and Lys201. ATP is bound by residues Lys201, His220, and 236 to 244; that span reads GLSGTGKTT. 2 residues coordinate Mn(2+): Lys201 and His220. Asp257 contributes to the Mn(2+) binding site. ATP is bound by residues Glu285, Arg321, 440–441, and Thr446; that span reads RI. Arg321 is a substrate binding site.

Belongs to the phosphoenolpyruvate carboxykinase (ATP) family. Mn(2+) serves as cofactor.

Its subcellular location is the cytoplasm. The catalysed reaction is oxaloacetate + ATP = phosphoenolpyruvate + ADP + CO2. The protein operates within carbohydrate biosynthesis; gluconeogenesis. In terms of biological role, involved in the gluconeogenesis. Catalyzes the conversion of oxaloacetate (OAA) to phosphoenolpyruvate (PEP) through direct phosphoryl transfer between the nucleoside triphosphate and OAA. This chain is Phosphoenolpyruvate carboxykinase (ATP), found in Staphylococcus haemolyticus (strain JCSC1435).